We begin with the raw amino-acid sequence, 657 residues long: DNA-directed RNA polymerase III subunit RPC3 (657 aa).

The segment at 390-450 (HSNQSLKRKQ…LDLDEDDSDP (61 aa)) is disordered. A compositionally biased stretch (acidic residues) spans 428 to 448 (EESEEENEEGDANLDLDEDDS). A leucine-zipper region spans residues 584-605 (LTWNLARLISKLETLKEENATL).

Belongs to the RNA polymerase beta chain family. As to quaternary structure, component of the RNA polymerase III (Pol III) complex consisting of 17 subunits.

Its subcellular location is the nucleus. Its function is as follows. DNA-dependent RNA polymerase catalyzes the transcription of DNA into RNA using the four ribonucleoside triphosphates as substrates. Specific core component of RNA polymerase III which synthesizes small RNAs, such as 5S rRNA and tRNAs. In Kluyveromyces lactis (strain ATCC 8585 / CBS 2359 / DSM 70799 / NBRC 1267 / NRRL Y-1140 / WM37) (Yeast), this protein is DNA-directed RNA polymerase III subunit RPC3 (RPC82).